The primary structure comprises 776 residues: MASLNYRQLLTNSYTVNLSDEIQEIGSAKAQNVTINPGPFAQTGYAPVNWGAGETNDSTTVEPLLDGPYQPTTFNPPTSYWVLLAPTVEGVIIQGTNNTDRWLATILIEPNVQTTNRTYNLFGQQVTLSVDNTSQTQWKFIDVSKTTLTGNYTQHGPLFSTPKLYAVMKFSGRIYTYNGTTPNATTGYYSTTNYDTVNMTSFCDFYIIPRNQEEKCTEYINHGLPPIQNTRNVVPVSLSAREIVHTRAQVNEDIVVSKTSLWKEMQYNRDITIRFKFDRTIIKAGGLGYKWSEISFKPITYQYTYTRDGEQITAHTTCSVNGVNNFSYNGGSLPTDFAISRYEVIKENSFVYIDYWDDSQAFRNMVYVRSLAANLNTVTCTGGSYSFALPLGNYPVMTGGTVTLHPAGVTLSTQFTDFVSLNSLRFRFRLTVGEPSFSITRTRVSRLYGLPAANPNNQREHYEISGRLSLISLVPSNDDYQTPIMNSVTVRQDLERQLGELRDEFNSLSQQIAMSQLIDLALLPLDMFSMFSGIKSTIDAAKSMATNVMKRFKRSNLASSVSTLTDAMSDAASSISRSSSIRSIGSSASAWTEVSTSITDISTTVDTVSTQTATIAKRLRLKEIATQTDGMNFDDISAAVLKTKIDKSAQITPSTLPEIVTEASEKFIPNRTYRVINNDEVFEAGMDGKFFAYRVDTFDEIPFDVQKFADLVTDSPVISAIIDLKTLKNLKDNYGISKQQAFDLLRSDPKVLREFINQNNPIIRNRIENLIMQCRL.

Residues 65 to 224 (LDGPYQPTTF…KCTEYINHGL (160 aa)) are spike head. Cys203 and Cys216 are joined by a disulfide. The segment at 248-479 (AQVNEDIVVS…LISLVPSNDD (232 aa)) is spike body and stalk (antigen domain). A DGE motif; interaction with ITGA2/ITGB1 heterodimer motif is present at residues 308–310 (DGE). Cys318 and Cys380 are oxidised to a cystine. Residues 389-409 (LPLGNYPVMTGGTVTLHPAGV) form a hydrophobic; possible role in virus entry into host cell region. The YGL motif; interaction with ITGA4 signature appears at 448–450 (YGL). Residues 484-518 (IMNSVTVRQDLERQLGELRDEFNSLSQQIAMSQLI) are a coiled coil. Residues 510 to 776 (QQIAMSQLID…IENLIMQCRL (267 aa)) are spike foot. The KID motif; interaction with HSPA8 signature appears at 644 to 646 (KID).

The protein belongs to the rotavirus VP4 family. As to quaternary structure, homotrimer. VP4 adopts a dimeric appearance above the capsid surface, while forming a trimeric base anchored inside the capsid layer. Only hints of the third molecule are observed above the capsid surface. It probably performs a series of molecular rearrangements during viral entry. Prior to trypsin cleavage, it is flexible. The priming trypsin cleavage triggers its rearrangement into rigid spikes with approximate two-fold symmetry of their protruding parts. After an unknown second triggering event, cleaved VP4 may undergo another rearrangement, in which two VP5* subunits fold back on themselves and join a third subunit to form a tightly associated trimer, shaped like a folded umbrella. Interacts with VP6. Interacts with VP7. In terms of assembly, homotrimer. The trimer is coiled-coil stabilized by its C-terminus, however, its N-terminus, known as antigen domain or 'body', seems to be flexible allowing it to self-associate either as a dimer or a trimer. In terms of processing, proteolytic cleavage by trypsin results in activation of VP4 functions and greatly increases infectivity. The penetration into the host cell is dependent on trypsin treatment of VP4. It produces two peptides, VP5* and VP8* that remain associated with the virion. Cleavage of VP4 by trypsin probably occurs in vivo in the lumen of the intestine prior to infection of enterocytes. Trypsin seems to be incorporated into the three-layered viral particles but remains inactive as long as the viral outer capsid is intact and would only be activated upon the solubilization of the latter.

It is found in the virion. The protein resides in the host rough endoplasmic reticulum. Its subcellular location is the host cell membrane. The protein localises to the host cytoplasm. It localises to the host cytoskeleton. It is found in the host endoplasmic reticulum-Golgi intermediate compartment. Spike-forming protein that mediates virion attachment to the host epithelial cell receptors and plays a major role in cell penetration, determination of host range restriction and virulence. Rotavirus attachment and entry into the host cell probably involves multiple sequential contacts between the outer capsid proteins VP4 and VP7, and the cell receptors. It is subsequently lost, together with VP7, following virus entry into the host cell. Following entry into the host cell, low intracellular or intravesicular Ca(2+) concentration probably causes the calcium-stabilized VP7 trimers to dissociate from the virion. This step is probably necessary for the membrane-disrupting entry step and the release of VP4, which is locked onto the virion by VP7. During the virus exit from the host cell, VP4 seems to be required to target the newly formed virions to the host cell lipid rafts. Functionally, forms the spike 'foot' and 'body' and acts as a membrane permeabilization protein that mediates release of viral particles from endosomal compartments into the cytoplasm. During entry, the part of VP5* that protrudes from the virus folds back on itself and reorganizes from a local dimer to a trimer. This reorganization may be linked to membrane penetration by exposing VP5* hydrophobic region. In integrin-dependent strains, VP5* targets the integrin heterodimer ITGA2/ITGB1 for cell attachment. In terms of biological role, forms the head of the spikes and mediates the recognition of specific host cell surface glycans. It is the viral hemagglutinin and an important target of neutralizing antibodies. In sialic acid-dependent strains, VP8* binds to host cell sialic acid, most probably a ganglioside, providing the initial contact. In some other strains, VP8* mediates the attachment to histo-blood group antigens (HBGAs) for viral entry. In Rotavirus A (strain RVA/Pig/Mexico/YM/1983/G11P9[7]) (RV-A), this protein is Outer capsid protein VP4.